We begin with the raw amino-acid sequence, 95 residues long: Co-chaperonin GroES (95 aa).

This sequence belongs to the GroES chaperonin family. In terms of assembly, heptamer of 7 subunits arranged in a ring. Interacts with the chaperonin GroEL.

It localises to the cytoplasm. Together with the chaperonin GroEL, plays an essential role in assisting protein folding. The GroEL-GroES system forms a nano-cage that allows encapsulation of the non-native substrate proteins and provides a physical environment optimized to promote and accelerate protein folding. GroES binds to the apical surface of the GroEL ring, thereby capping the opening of the GroEL channel. In Aliivibrio salmonicida (strain LFI1238) (Vibrio salmonicida (strain LFI1238)), this protein is Co-chaperonin GroES.